The following is a 453-amino-acid chain: Bifunctional protein GlmU (453 aa).

Residues Met1–Lys225 form a pyrophosphorylase region. Residues Leu6–Gly9, Lys20, Gln71, Gly76–Thr77, Tyr98–Asp100, Gly135, Glu150, Asn165, and Asn223 each bind UDP-N-acetyl-alpha-D-glucosamine. Mg(2+) is bound at residue Asp100. Asn223 contacts Mg(2+). Residues Ala226–Asp246 form a linker region. Positions Gly247–Ser453 are N-acetyltransferase. UDP-N-acetyl-alpha-D-glucosamine-binding residues include Arg329 and Lys347. His359 (proton acceptor) is an active-site residue. Residues Tyr362 and Asn373 each coordinate UDP-N-acetyl-alpha-D-glucosamine. Acetyl-CoA-binding positions include Ala376, Asn382–Tyr383, Ser401, and Ala419.

This sequence in the N-terminal section; belongs to the N-acetylglucosamine-1-phosphate uridyltransferase family. The protein in the C-terminal section; belongs to the transferase hexapeptide repeat family. Homotrimer. It depends on Mg(2+) as a cofactor.

The protein resides in the cytoplasm. It carries out the reaction alpha-D-glucosamine 1-phosphate + acetyl-CoA = N-acetyl-alpha-D-glucosamine 1-phosphate + CoA + H(+). It catalyses the reaction N-acetyl-alpha-D-glucosamine 1-phosphate + UTP + H(+) = UDP-N-acetyl-alpha-D-glucosamine + diphosphate. The protein operates within nucleotide-sugar biosynthesis; UDP-N-acetyl-alpha-D-glucosamine biosynthesis; N-acetyl-alpha-D-glucosamine 1-phosphate from alpha-D-glucosamine 6-phosphate (route II): step 2/2. Its pathway is nucleotide-sugar biosynthesis; UDP-N-acetyl-alpha-D-glucosamine biosynthesis; UDP-N-acetyl-alpha-D-glucosamine from N-acetyl-alpha-D-glucosamine 1-phosphate: step 1/1. It participates in bacterial outer membrane biogenesis; LPS lipid A biosynthesis. Functionally, catalyzes the last two sequential reactions in the de novo biosynthetic pathway for UDP-N-acetylglucosamine (UDP-GlcNAc). The C-terminal domain catalyzes the transfer of acetyl group from acetyl coenzyme A to glucosamine-1-phosphate (GlcN-1-P) to produce N-acetylglucosamine-1-phosphate (GlcNAc-1-P), which is converted into UDP-GlcNAc by the transfer of uridine 5-monophosphate (from uridine 5-triphosphate), a reaction catalyzed by the N-terminal domain. The sequence is that of Bifunctional protein GlmU from Burkholderia ambifaria (strain ATCC BAA-244 / DSM 16087 / CCUG 44356 / LMG 19182 / AMMD) (Burkholderia cepacia (strain AMMD)).